The chain runs to 166 residues: Transcriptional repressor NrdR (166 aa).

A zinc finger lies at 3-34; that stretch reads CIKCGNMEDKVIDSRPIKEGKSIRRRRECLRC. The ATP-cone domain occupies 49–139; sequence LFVKKRNGSI…VYCKFHDAKD (91 aa).

The protein belongs to the NrdR family. The cofactor is Zn(2+).

In terms of biological role, negatively regulates transcription of bacterial ribonucleotide reductase nrd genes and operons by binding to NrdR-boxes. The protein is Transcriptional repressor NrdR of Methylacidiphilum infernorum (isolate V4) (Methylokorus infernorum (strain V4)).